We begin with the raw amino-acid sequence, 458 residues long: MWSEGRYEYERIPRERAPPRSHPSDGYNRLVNIVPKKPPLLDRPGEGSYNRYYSHVDYRDYDEGRSFSHDRRSGPPHRGDESGYRWTRDDHSASRQPEYRDMRDGFRRKSFYSSHYARERSPYKRDNTFFRESPVGRKDSPHSRSGSSVSSRSYSPERSKSYSFHQSQHRKSVRPGASYKRQNEGNPERDKERPVQSLKTSRDTSPSSGSAVSSSKVLDKPSRLTEKELAEAASKWAAEKLEKSDESNLPEISEYEAGSTAPLFTDQPEEPESNTTHGIELFEDSQLTTRSKAIASKTKEIEQVYRQDCETFGMVVKMLIEKDPSLEKSIQFALRQNLHEIESAGQTWQQVPPVRNTEMDHDGTPENEGEETAQSAPQPPQAPQPLQPRKKRVRRTTQLRRTTGAPDITWGMLKKTTQEAERILLRTQTPFTPENLFLAMLSVVHCNSRKDVKPENKQ.

2 stretches are compositionally biased toward basic and acidic residues: residues 1-18 (MWSE…ERAP) and 63-107 (EGRS…DGFR). Disordered stretches follow at residues 1-51 (MWSE…SYNR) and 63-284 (EGRS…LFED). The Nuclear localization signal signature appears at 103 to 109 (RDGFRRK). Lysine 109 participates in a covalent cross-link: Glycyl lysine isopeptide (Lys-Gly) (interchain with G-Cter in SUMO2). Serine 110, serine 114, serine 133, and serine 140 each carry phosphoserine. Over residues 116–142 (YARERSPYKRDNTFFRESPVGRKDSPH) the composition is skewed to basic and acidic residues. Over residues 143-154 (SRSGSSVSSRSY) the composition is skewed to low complexity. Residue lysine 160 forms a Glycyl lysine isopeptide (Lys-Gly) (interchain with G-Cter in SUMO2) linkage. Phosphoserine is present on residues serine 161 and serine 167. Lysine 180 participates in a covalent cross-link: Glycyl lysine isopeptide (Lys-Gly) (interchain with G-Cter in SUMO2). Residues 181-194 (RQNEGNPERDKERP) are compositionally biased toward basic and acidic residues. Serine 197 carries the post-translational modification Phosphoserine. Lysine 199 is covalently cross-linked (Glycyl lysine isopeptide (Lys-Gly) (interchain with G-Cter in SUMO2)). Phosphoserine occurs at positions 201 and 205. Positions 205–215 (SPSSGSAVSSS) are enriched in low complexity. Positions 217-230 (VLDKPSRLTEKELA) are enriched in basic and acidic residues. Residue lysine 227 forms a Glycyl lysine isopeptide (Lys-Gly) (interchain with G-Cter in SUMO2) linkage. Lysine 235 and lysine 240 each carry N6-acetyllysine; alternate. Residues lysine 235 and lysine 240 each participate in a glycyl lysine isopeptide (Lys-Gly) (interchain with G-Cter in SUMO2); alternate cross-link. The span at 237-246 (AAEKLEKSDE) shows a compositional bias: basic and acidic residues. Serine 325 is modified (phosphoserine). Lysine 328 is covalently cross-linked (Glycyl lysine isopeptide (Lys-Gly) (interchain with G-Cter in SUMO2)). The tract at residues 345-406 (GQTWQQVPPV…TQLRRTTGAP (62 aa)) is disordered. The span at 377–386 (PQPPQAPQPL) shows a compositional bias: pro residues. The span at 388–398 (PRKKRVRRTTQ) shows a compositional bias: basic residues. A Glycyl lysine isopeptide (Lys-Gly) (interchain with G-Cter in SUMO2) cross-link involves residue lysine 453.

As to quaternary structure, homodimer. Component of the HUSH complex; at least composed of TASOR, PPHLN1 and MPHOSPH8. Interacts with SIN3A and HDAC1. May interact with PPL. Substrate of transglutaminase (in vitro). As to expression, ubiquitous.

It is found in the nucleus. It localises to the cytoplasm. Its subcellular location is the chromosome. In terms of biological role, component of the HUSH complex, a multiprotein complex that mediates epigenetic repression. The HUSH complex is recruited to genomic loci rich in H3K9me3 and is probably required to maintain transcriptional silencing by promoting recruitment of SETDB1, a histone methyltransferase that mediates further deposition of H3K9me3. In the HUSH complex, contributes to the maintenance of the complex at chromatin. Acts as a transcriptional corepressor and regulates the cell cycle, probably via the HUSH complex. The HUSH complex is also involved in the silencing of unintegrated retroviral DNA: some part of the retroviral DNA formed immediately after infection remains unintegrated in the host genome and is transcriptionally repressed. May be involved in epithelial differentiation by contributing to epidermal integrity and barrier formation. This Homo sapiens (Human) protein is Periphilin-1.